A 222-amino-acid polypeptide reads, in one-letter code: Large ribosomal subunit protein uL11c (222 aa).

The segment at 1-20 (MASSSLSTLCSSTSSSLHPN) is disordered. Residues 1–62 (MASSSLSTLC…TPRFLTVIAM (62 aa)) constitute a chloroplast transit peptide.

This sequence belongs to the universal ribosomal protein uL11 family. Part of the ribosomal stalk of the 50S ribosomal subunit. Interacts with L10 and the large rRNA to form the base of the stalk. L10 forms an elongated spine to which L12 dimers bind in a sequential fashion forming a multimeric L10(L12)X complex.

It is found in the plastid. Its subcellular location is the chloroplast. Functionally, forms part of the ribosomal stalk which helps the ribosome interact with GTP-bound translation factors. This Arabidopsis thaliana (Mouse-ear cress) protein is Large ribosomal subunit protein uL11c (RPL11).